The sequence spans 301 residues: tRNA uridine(34) hydroxylase (301 aa).

The Rhodanese domain maps to 121–215; sequence RSDDVVLIDT…YLEEVPAENS (95 aa). Cys175 serves as the catalytic Cysteine persulfide intermediate.

Belongs to the TrhO family.

The enzyme catalyses uridine(34) in tRNA + AH2 + O2 = 5-hydroxyuridine(34) in tRNA + A + H2O. In terms of biological role, catalyzes oxygen-dependent 5-hydroxyuridine (ho5U) modification at position 34 in tRNAs. This Ruegeria pomeroyi (strain ATCC 700808 / DSM 15171 / DSS-3) (Silicibacter pomeroyi) protein is tRNA uridine(34) hydroxylase.